We begin with the raw amino-acid sequence, 443 residues long: Thymidine phosphorylase (443 aa).

Belongs to the thymidine/pyrimidine-nucleoside phosphorylase family. Homodimer.

It carries out the reaction thymidine + phosphate = 2-deoxy-alpha-D-ribose 1-phosphate + thymine. Its pathway is pyrimidine metabolism; dTMP biosynthesis via salvage pathway; dTMP from thymine: step 1/2. Functionally, the enzymes which catalyze the reversible phosphorolysis of pyrimidine nucleosides are involved in the degradation of these compounds and in their utilization as carbon and energy sources, or in the rescue of pyrimidine bases for nucleotide synthesis. This chain is Thymidine phosphorylase, found in Shewanella putrefaciens (strain CN-32 / ATCC BAA-453).